Consider the following 402-residue polypeptide: Argininosuccinate synthase (402 aa).

9–17 contacts ATP; that stretch reads AYSGGLDTS. Tyr87 lines the L-citrulline pocket. Gly117 provides a ligand contact to ATP. Thr119, Asn123, and Asp124 together coordinate L-aspartate. Asn123 serves as a coordination point for L-citrulline. Positions 127, 176, 185, 261, and 273 each coordinate L-citrulline.

The protein belongs to the argininosuccinate synthase family. Type 1 subfamily. In terms of assembly, homotetramer.

The protein localises to the cytoplasm. The enzyme catalyses L-citrulline + L-aspartate + ATP = 2-(N(omega)-L-arginino)succinate + AMP + diphosphate + H(+). It functions in the pathway amino-acid biosynthesis; L-arginine biosynthesis; L-arginine from L-ornithine and carbamoyl phosphate: step 2/3. In Chlorobium phaeobacteroides (strain BS1), this protein is Argininosuccinate synthase.